Here is a 197-residue protein sequence, read N- to C-terminus: Peptidyl-tRNA hydrolase (197 aa).

Residue Tyr-21 coordinates tRNA. The active-site Proton acceptor is the His-26. TRNA contacts are provided by Tyr-72, Asn-74, and Asn-120.

Belongs to the PTH family. In terms of assembly, monomer.

It is found in the cytoplasm. It catalyses the reaction an N-acyl-L-alpha-aminoacyl-tRNA + H2O = an N-acyl-L-amino acid + a tRNA + H(+). Its function is as follows. Hydrolyzes ribosome-free peptidyl-tRNAs (with 1 or more amino acids incorporated), which drop off the ribosome during protein synthesis, or as a result of ribosome stalling. Catalyzes the release of premature peptidyl moieties from peptidyl-tRNA molecules trapped in stalled 50S ribosomal subunits, and thus maintains levels of free tRNAs and 50S ribosomes. In Saccharophagus degradans (strain 2-40 / ATCC 43961 / DSM 17024), this protein is Peptidyl-tRNA hydrolase.